The primary structure comprises 614 residues: Glutamine--fructose-6-phosphate aminotransferase [isomerizing] (614 aa).

C2 acts as the Nucleophile; for GATase activity in catalysis. The Glutamine amidotransferase type-2 domain maps to 2–221 (CGIVGYIGKR…DGEIAVINRG (220 aa)). 2 consecutive SIS domains span residues 291–430 (YKEK…EKGT) and 463–604 (LSKT…VDQP). Catalysis depends on K609, which acts as the For Fru-6P isomerization activity.

Homodimer.

It is found in the cytoplasm. It carries out the reaction D-fructose 6-phosphate + L-glutamine = D-glucosamine 6-phosphate + L-glutamate. Its function is as follows. Catalyzes the first step in hexosamine metabolism, converting fructose-6P into glucosamine-6P using glutamine as a nitrogen source. The sequence is that of Glutamine--fructose-6-phosphate aminotransferase [isomerizing] from Bacteroides thetaiotaomicron (strain ATCC 29148 / DSM 2079 / JCM 5827 / CCUG 10774 / NCTC 10582 / VPI-5482 / E50).